We begin with the raw amino-acid sequence, 221 residues long: Iron-sulfur cluster repair protein YtfE (221 aa).

This sequence belongs to the RIC family. YtfE subfamily. In terms of assembly, homodimer.

It localises to the cytoplasm. Its function is as follows. Di-iron-containing protein involved in the repair of iron-sulfur clusters damaged by oxidative and nitrosative stress conditions. The protein is Iron-sulfur cluster repair protein YtfE of Dickeya chrysanthemi (strain Ech1591) (Dickeya zeae (strain Ech1591)).